Here is a 397-residue protein sequence, read N- to C-terminus: 1-deoxy-D-xylulose 5-phosphate reductoisomerase (397 aa).

NADPH is bound by residues T10, G11, S12, I13, N39, and N125. Position 126 (K126) interacts with 1-deoxy-D-xylulose 5-phosphate. E127 lines the NADPH pocket. D151 contacts Mn(2+). 1-deoxy-D-xylulose 5-phosphate contacts are provided by S152, E153, S187, and H210. E153 is a binding site for Mn(2+). Position 216 (G216) interacts with NADPH. Positions 223, 228, 229, and 232 each coordinate 1-deoxy-D-xylulose 5-phosphate. E232 serves as a coordination point for Mn(2+).

It belongs to the DXR family. Homodimer. Requires Mg(2+) as cofactor. It depends on Mn(2+) as a cofactor.

It carries out the reaction 2-C-methyl-D-erythritol 4-phosphate + NADP(+) = 1-deoxy-D-xylulose 5-phosphate + NADPH + H(+). It functions in the pathway isoprenoid biosynthesis; isopentenyl diphosphate biosynthesis via DXP pathway; isopentenyl diphosphate from 1-deoxy-D-xylulose 5-phosphate: step 1/6. Its function is as follows. Catalyzes the NADPH-dependent rearrangement and reduction of 1-deoxy-D-xylulose-5-phosphate (DXP) to 2-C-methyl-D-erythritol 4-phosphate (MEP). This is 1-deoxy-D-xylulose 5-phosphate reductoisomerase from Wigglesworthia glossinidia brevipalpis.